Here is a 129-residue protein sequence, read N- to C-terminus: NADH-quinone oxidoreductase subunit A (129 aa).

The next 3 membrane-spanning stretches (helical) occupy residues 9-29 (FPIGVVLLVAVVLAFTMLGLA), 68-88 (LLFIVFDIEAIFLYPWAVLLL), and 97-117 (LGWPGFVSMGIFVFTLVAGLV).

It belongs to the complex I subunit 3 family. As to quaternary structure, NDH-1 is composed of 14 different subunits. Subunits NuoA, H, J, K, L, M, N constitute the membrane sector of the complex.

It localises to the cell inner membrane. The catalysed reaction is a quinone + NADH + 5 H(+)(in) = a quinol + NAD(+) + 4 H(+)(out). In terms of biological role, NDH-1 shuttles electrons from NADH, via FMN and iron-sulfur (Fe-S) centers, to quinones in the respiratory chain. The immediate electron acceptor for the enzyme in this species is believed to be ubiquinone. Couples the redox reaction to proton translocation (for every two electrons transferred, four hydrogen ions are translocated across the cytoplasmic membrane), and thus conserves the redox energy in a proton gradient. The protein is NADH-quinone oxidoreductase subunit A of Anaeromyxobacter sp. (strain K).